Consider the following 75-residue polypeptide: ATP synthase subunit epsilon, mitochondrial (75 aa).

Residues 1-9 (MIRRSCALL) constitute a mitochondrion transit peptide.

It belongs to the eukaryotic ATPase epsilon family. As to quaternary structure, F-type ATPases have 2 components, F(1) - the catalytic core - and F(o) - the membrane proton channel. F(1) has five subunits: alpha(3), beta(3), gamma(1), delta(1), epsilon(1), plus the additional subunit P18 (Tb427.05.1710) that is not present in F(1)F(o) ATP synthase from metazoa. Subunit P18 (Tb927.5.1710) interacts with the alpha subunit with a 1:1 stoichiometry; the interaction is direct. Subunit gamma is part of the central stalk. F(o) has three main subunits: a, b and c. The trypanosomal ATPase complex contains additional subunits that are not present in the F(1)F(o) ATP synthase from metazoa.

The protein resides in the mitochondrion. Its subcellular location is the mitochondrion inner membrane. Functionally, mitochondrial membrane ATP synthase (F(1)F(o) ATP synthase) produces ATP from ADP in the presence of a proton gradient across the membrane which is generated by electron transport complexes of the respiratory chain. F-type ATPases consist of two structural domains, F(1) - containing the extramembraneous catalytic core, and F(o) - containing the membrane proton channel, linked together by a central stalk and a peripheral stalk. During catalysis, ATP synthesis in the catalytic domain of F(1) is coupled via a rotary mechanism of the central stalk subunits to proton translocation. Subunits alpha and beta form the catalytic core in F(1). Rotation of the central stalk against the surrounding alpha(3)beta(3) subunits leads to hydrolysis of ATP in three separate catalytic sites on the beta subunits. Contrary to the procyclic, insect form that requires F(1)F(o) ATP synthase for ATP synthesis, the bloodstream form relies on ATP hydrolysis by F(1)F(o) ATP synthase to maintain its mitochondrial membrane potential. This chain is ATP synthase subunit epsilon, mitochondrial, found in Trypanosoma brucei brucei.